Here is a 225-residue protein sequence, read N- to C-terminus: tRNA (guanine-N(7)-)-methyltransferase (225 aa).

S-adenosyl-L-methionine is bound by residues glutamate 56, glutamate 81, aspartate 108, and aspartate 131. Aspartate 131 is a catalytic residue. Residues lysine 135, aspartate 167, and 204 to 207 each bind substrate; that span reads TKFE.

Belongs to the class I-like SAM-binding methyltransferase superfamily. TrmB family.

The catalysed reaction is guanosine(46) in tRNA + S-adenosyl-L-methionine = N(7)-methylguanosine(46) in tRNA + S-adenosyl-L-homocysteine. It functions in the pathway tRNA modification; N(7)-methylguanine-tRNA biosynthesis. Functionally, catalyzes the formation of N(7)-methylguanine at position 46 (m7G46) in tRNA. This is tRNA (guanine-N(7)-)-methyltransferase from Legionella pneumophila (strain Corby).